The chain runs to 410 residues: Putative formamidase C869.04 (410 aa).

The protein belongs to the acetamidase/formamidase family. In terms of assembly, homotrimer.

The protein resides in the cytoplasm. It localises to the nucleus. The enzyme catalyses formamide + H2O = formate + NH4(+). Hydrolyzes formamide with the production of ammonia which can be used as a source of nitrogen for growth. May also act on acetamide, propanamide and butanamide. The protein is Putative formamidase C869.04 of Schizosaccharomyces pombe (strain 972 / ATCC 24843) (Fission yeast).